The sequence spans 70 residues: Large ribosomal subunit protein uL29 (70 aa).

Belongs to the universal ribosomal protein uL29 family.

The chain is Large ribosomal subunit protein uL29 from Clostridium botulinum (strain ATCC 19397 / Type A).